The following is a 373-amino-acid chain: tRNA N6-adenosine threonylcarbamoyltransferase (373 aa).

Residues His-128, His-132, and Tyr-149 each coordinate a divalent metal cation. Residues 149–153, Asp-181, Gly-196, Glu-200, and Asn-302 each bind substrate; that span reads YVSGG. Residue Asp-331 participates in a divalent metal cation binding.

It belongs to the KAE1 / TsaD family. As to quaternary structure, component of the EKC/KEOPS complex composed of at least BUD32, CGI121, GON7, KAE1 and PCC1; the whole complex dimerizes. It depends on a divalent metal cation as a cofactor.

It localises to the cytoplasm. It is found in the nucleus. It carries out the reaction L-threonylcarbamoyladenylate + adenosine(37) in tRNA = N(6)-L-threonylcarbamoyladenosine(37) in tRNA + AMP + H(+). Component of the EKC/KEOPS complex that is required for the formation of a threonylcarbamoyl group on adenosine at position 37 (t(6)A37) in tRNAs that read codons beginning with adenine. The complex is probably involved in the transfer of the threonylcarbamoyl moiety of threonylcarbamoyl-AMP (TC-AMP) to the N6 group of A37. KAE1 likely plays a direct catalytic role in this reaction, but requires other protein(s) of the complex to fulfill this activity. The EKC/KEOPS complex also promotes both telomere uncapping and telomere elongation. The complex is required for efficient recruitment of transcriptional coactivators. The chain is tRNA N6-adenosine threonylcarbamoyltransferase from Candida glabrata (strain ATCC 2001 / BCRC 20586 / JCM 3761 / NBRC 0622 / NRRL Y-65 / CBS 138) (Yeast).